The chain runs to 474 residues: tRNA modification GTPase MnmE (474 aa).

Arginine 35, glutamate 92, and lysine 135 together coordinate (6S)-5-formyl-5,6,7,8-tetrahydrofolate. The region spanning 231-396 is the TrmE-type G domain; sequence GLHVVLAGQP…LRAALLEIAG (166 aa). Residue asparagine 241 coordinates K(+). GTP-binding positions include 241 to 246, 260 to 266, 285 to 288, and 377 to 379; these read NVGKSS, TPIAGTT, DTAG, and SAR. A Mg(2+)-binding site is contributed by serine 245. K(+)-binding residues include threonine 260, isoleucine 262, and threonine 265. Mg(2+) is bound at residue threonine 266. Lysine 474 contacts (6S)-5-formyl-5,6,7,8-tetrahydrofolate.

This sequence belongs to the TRAFAC class TrmE-Era-EngA-EngB-Septin-like GTPase superfamily. TrmE GTPase family. As to quaternary structure, homodimer. Heterotetramer of two MnmE and two MnmG subunits. Requires K(+) as cofactor.

The protein resides in the cytoplasm. Functionally, exhibits a very high intrinsic GTPase hydrolysis rate. Involved in the addition of a carboxymethylaminomethyl (cmnm) group at the wobble position (U34) of certain tRNAs, forming tRNA-cmnm(5)s(2)U34. The polypeptide is tRNA modification GTPase MnmE (Ralstonia nicotianae (strain ATCC BAA-1114 / GMI1000) (Ralstonia solanacearum)).